Here is a 617-residue protein sequence, read N- to C-terminus: DNA-(apurinic or apyrimidinic site) endonuclease (617 aa).

The disordered stretch occupies residues isoleucine 74–asparagine 99. Residues asparagine 81–asparagine 99 are compositionally biased toward low complexity. Mg(2+) is bound by residues asparagine 284 and glutamate 317. Positions serine 326–lysine 349 are disordered. The segment covering cysteine 329–lysine 349 has biased composition (basic and acidic residues). Positions 474, 476, 606, and 607 each coordinate Mg(2+). Histidine 607 (proton acceptor) is an active-site residue.

Belongs to the DNA repair enzymes AP/ExoA family. Mg(2+) is required as a cofactor. Requires Mn(2+) as cofactor. In terms of processing, may be proteolytically cleaved into a 64 kDa form.

It localises to the mitochondrion. The enzyme catalyses Exonucleolytic cleavage in the 3'- to 5'-direction to yield nucleoside 5'-phosphates.. Apurinic/apyrimidinic (AP) endonuclease activity is maximal at low Mg(2+) (0.5-2 mM) with no activity seen at high concentrations (more than 10 mM). 3'-5' exonuclease activity is maximal in the range of 0.5-2 mM Mg(2+) with activity seen up to 10 mM Mg(2+). Functionally, multifunctional protein that plays a central role in mitochondrial DNA base excision repair (BER) pathway induced by oxidative stress. Has apurinic/apyrimidinic (AP) endonuclease activity towards double-stranded DNA (dsDNA). Has nucleotide incision repair (NIR) activity; acts on dsDNA with oxidized bases thymine glycol and 5,6-dihydro-2'-deoxyuridine. Has 3'-5' exonuclease; can use dsDNA templates with 3'-OH termini including blunt-end, gapped and mismatched 3'-recessed. Has 3'-phosphatase activity; cleaves 3'-phosphate from blunt, recessed and gapped dsDNA templates, followed by 3'-5' exonuclease activity. Has RNase H-like activity; cleaves RNA on 3'-recessed RNA-DNA duplex. Plays a role in merosome infection of host erythrocytes. This chain is DNA-(apurinic or apyrimidinic site) endonuclease, found in Plasmodium falciparum (isolate 3D7).